The sequence spans 647 residues: Putative lipase YDL109C (647 aa).

Ser-274 acts as the Charge relay system in catalysis. A disordered region spans residues 502-523 (PPPSPTLYEGTAAKEGETRKTR). Over residues 513 to 523 (AAKEGETRKTR) the composition is skewed to basic and acidic residues.

It belongs to the putative lipase ROG1 family.

Its function is as follows. Involved in lipid metabolism. In Saccharomyces cerevisiae (strain ATCC 204508 / S288c) (Baker's yeast), this protein is Putative lipase YDL109C.